The chain runs to 258 residues: Coiled-coil domain-containing protein 107 (258 aa).

The first 24 residues, 1–24 (MASVVSLAGTLGLLLVSALPEVLG), serve as a signal peptide directing secretion. The segment covering 25–35 (DRRSPDRRAHP) has biased composition (basic and acidic residues). A disordered region spans residues 25 to 63 (DRRSPDRRAHPGDAGQVGPAAAEPRRQSPPSKNQRERAR). A helical transmembrane segment spans residues 66 to 86 (ALPLGALYTAAAVAFVLYKCL). The stretch at 106 to 134 (LQSEQHLAQLTQQLVQTEQHLNSLMAQLD) forms a coiled coil. The tract at residues 203–222 (EPLNWNTGTRNLTPPREMQP) is disordered.

The protein localises to the membrane. In Bos taurus (Bovine), this protein is Coiled-coil domain-containing protein 107 (CCDC107).